The primary structure comprises 555 residues: MDSDEGYNYEFDEDEECSEEDSGAEEEEDEDDDEPDDDNLDLGEVELVEPGLGVGGERDGLLCGETGGGGGSALGPGGGGGGGGGGGGPGHEQEEDYRYEVLTAEQILQHMVECIREVNEVIQNPATITRILLSHFNWDKEKLMERYFDGNLEKLFAECHVINPSKKSRTRQMNTRSSAQDMPCQICYLNYPNSYFTGLECGHKFCMQCWSEYLTTKIMEEGMGQTISCPAHGCDILVDDNTVMRLITDSKVKLKYQHLITNSFVECNRLLKWCPAPDCHHVVKVQYPDAKPVRCKCGRQFCFNCGENWHDPVKCKWLKKWIKKCDDDSETSNWIAANTKECPKCHVTIEKDGGCNHMVCRNQNCKAEFCWVCLGPWEPHGSAWYNCNRYNEDDAKAARDAQERSRAALQRYLFYCNRYMNHMQSLRFEHKLYAQVKQKMEEMQQHNMSWIEVQFLKKAVDVLCQCRATLMYTYVFAFYLKKNNQSIIFENNQADLENATEVLSGYLERDISQDSLQDIKQKVQDKYRYCESRRRVLLQHVHEGYEKDLWEYIED.

Acidic residues predominate over residues 1–47 (MDSDEGYNYEFDEDEECSEEDSGAEEEEDEDDDEPDDDNLDLGEVEL). The interval 1–93 (MDSDEGYNYE…GGGGGPGHEQ (93 aa)) is disordered. Over residues 65–90 (ETGGGGGSALGPGGGGGGGGGGGGPG) the composition is skewed to gly residues. Positions 103 to 151 (TAEQILQHMVECIREVNEVIQNPATITRILLSHFNWDKEKLMERYFDGN) are UBA-like. N6-acetyllysine is present on Lys140. Residues 180–391 (QDMPCQICYL…SAWYNCNRYN (212 aa)) are TRIAD supradomain. Zn(2+)-binding residues include Cys184, Cys187, Cys201, His203, Cys206, Cys209, Cys229, Cys234, Cys274, Cys279, Cys295, Cys297, Cys302, Cys305, His310, Cys315, Cys342, and Cys345. The segment at 184 to 234 (CQICYLNYPNSYFTGLECGHKFCMQCWSEYLTTKIMEEGMGQTISCPAHGC) adopts an RING-type 1 zinc-finger fold. An IBR-type zinc finger spans residues 254–315 (LKYQHLITNS…GENWHDPVKC (62 aa)). The RING-type 2; atypical zinc finger occupies 342 to 373 (CPKCHVTIEKDGGCNHMVCRNQNCKAEFCWVC). Cys355 is an active-site residue. Residues Cys360, Cys365, Cys370, Cys373, His380, and Cys387 each contribute to the Zn(2+) site. Positions 406–555 (RAALQRYLFY…EKDLWEYIED (150 aa)) are ariadne domain.

Belongs to the RBR family. Ariadne subfamily. As to quaternary structure, interacts (via the first RING-type zinc finger) with UBE2L3. Associates with cullin-RING ubiquitin ligase (CRL) complexes containing CUL1, CUL2 and CUL3. Interacts with neddylated CUL1. Interacts with neddylated CUL2. Interacts with neddylated CUL3. Interacts with neddylated CUL4A.

The protein resides in the cytoplasm. The protein localises to the nucleus. Its subcellular location is the cajal body. The catalysed reaction is [E2 ubiquitin-conjugating enzyme]-S-ubiquitinyl-L-cysteine + [acceptor protein]-L-lysine = [E2 ubiquitin-conjugating enzyme]-L-cysteine + [acceptor protein]-N(6)-ubiquitinyl-L-lysine.. It participates in protein modification; protein ubiquitination. Autoinhibited by the ariadne domain, which masks the second RING-type zinc finger that contains the active site and inhibits the E3 activity. Inhibition is relieved upon binding to neddylated cullin-RING ubiquitin ligase complexes, which activate the E3 ligase activity of ARIH1. Functionally, E3 ubiquitin-protein ligase, which catalyzes ubiquitination of target proteins together with ubiquitin-conjugating enzyme E2 UBE2L3. Acts as an atypical E3 ubiquitin-protein ligase by working together with cullin-RING ubiquitin ligase (CRL) complexes and initiating ubiquitination of CRL substrates: associates with CRL complexes and specifically mediates addition of the first ubiquitin on CRLs targets. The initial ubiquitin is then elongated by CDC34/UBE2R1 and UBE2R2. E3 ubiquitin-protein ligase activity is activated upon binding to neddylated cullin-RING ubiquitin ligase complexes. Plays a role in protein translation in response to DNA damage by mediating ubiquitination of EIF4E2, the consequences of EIF4E2 ubiquitination are however unclear. According to a report, EIF4E2 ubiquitination leads to promote EIF4E2 cap-binding and protein translation arrest. According to another report EIF4E2 ubiquitination leads to its subsequent degradation. Acts as the ligase involved in ISGylation of EIF4E2. In vitro, controls the degradation of the LINC (LInker of Nucleoskeleton and Cytoskeleton) complex member SUN2 and may therefore have a role in the formation and localization of the LINC complex, and as a consequence, may act in nuclear subcellular localization and nuclear morphology. The sequence is that of E3 ubiquitin-protein ligase ARIH1 (ARIH1) from Bos taurus (Bovine).